The chain runs to 264 residues: Virulence plasmid ParA family protein pGP5-D (264 aa).

9-16 (FKGGTGKT) lines the ATP pocket.

It belongs to the ParA family.

Required for growth within mammalian cells. The protein is Virulence plasmid ParA family protein pGP5-D of Chlamydia trachomatis.